A 1521-amino-acid chain; its full sequence is MDFIDNQAEESDASSGHSDDEEPQSKKMKMAKEKSKRKKKMVASSDEDEDDDDDEEENRKEMQGFIADDDDEEEDAKSEKSEKSRHSGEDELDDEDLDLINENYDIRETKKQNRVQLGDSSDEDEPIRRPNHEDDDLLSERGSDDGDRRKDRGRGDRGGYGSESERSEDDFIEDDGDAPRRHRKRHRGDENLPEGAEDDARDVFGVEDFNLDEFYDDDDGEDGLEDEEEEIIEDDGEGGEIKIRRKKDTTKKSTLLESIEPSEIDRGFLLPGDKKIAKEDLPERFQLRRTPVTEADDDELESEALWIIKYAFEEGTVTNQADLDQDDKLDCIMNLDPSVYEDRKKAVIKSIKKVLQFIRVRSNSFEPTFIGFYRKEDIDNLLTMNNLWRVYDFDEKWCHLSEKKNKIYDLMRRMREYQELSDDLTAKRRPISDADLMDTKYAETLEQLTDIHANFQLLYGALLDDMIRWEKGRLTGEEEEQEYRVKFKSSIRNDKYQMCVENGIGELAGRFGLTAKQFSENLNWKKHDIEQDPMLPLEAAEEYVCPAFSDSDMVLNGAKFMLAKEISRQPQVRHSVRQEFRQSAHFWIKPTKKGRDTIDQTHPLYDKRYIKSKPVRSLTAEEFLFYHKAKEDGLVDVLIMYESEEDQDSNNYLVNKYLSDSIFQKDEYTENVEQWNSVRDECVNMAITEMLVPYMRDELYNTILEEAKTAVAKKCRKEFASRISRSGYLPDFDNNDDDDDGMDQHGARRIMAVCYPTERDEASFGVMVDENGAIVDYLRMVHFTKRTFGGGNNGLRKAESMDLFKKFVQRRKPHAIGLNIEDMECTRLKRDLEEAVADLFSQNLIYKPIPVFLMDNEAAKVYMRSNVSLAENPDHPPTLRQALSLARLLLDPIPEYAHLWNIDEDIFCLSLHPLQRDIDQEQLALVLSHELVNKVNEEGVDINKCAEFPHYTNMLQFTCGLGPRKATDLLKSIKANDNLIESRSKLVVGCKLGPKVFMNCAGFIKIDTIKVSEKTDAYVEVLDGSRVHPETYEWARKMAVDALEVDDSADPTAALQEIMESPDRLRDLDLDAFADELSRQGFGEKKSTLYDISSELSARYKDLRQPFQEPTGELLYDLLARSGKEIREGAKVLGTVQSVQYRKVDKDAADSMLPDVGEDGLFTCPCCKSFTSSAPGGIQEHMLGDSRQGGCPGTPVGIRVRFDNGMTGFCPNKNISSSHVDNPLTRVKINQPYYFKVLKLDKERFSLFLSCKSSDLKEDDLSQRDQYWDEHQYQADLELMKSESKKKTEANTRVKRVIAHPNFHNVSYEAATKMLDEMDWSECIIRPSANKDSGLSVTWKICDRVYHNFFVKESAKDQVFSIGRQLSVGGEDFEDLDELIARFVQPMIQISHEITTHKYFFPNGTCEETEAVEQFVREKKRELGRSPYVFSASYRQPCQFCISYMFDNTERIRHEYFKIVPHGVRFRHQNFDTLDRMMAWFKRHFHEPPIELRRSAIPAPQYRVGAPPAAPYYPPQFVGYH.

Residues 1–238 (MDFIDNQAEE…EEIIEDDGEG (238 aa)) are disordered. Basic residues predominate over residues 26–41 (KKMKMAKEKSKRKKKM). The Nuclear localization signal signature appears at 26-42 (KKMKMAKEKSKRKKKMV). Acidic residues-rich tracts occupy residues 45–56 (SDEDEDDDDDEE) and 67–76 (ADDDDEEEDA). Residues 77-89 (KSEKSEKSRHSGE) are compositionally biased toward basic and acidic residues. Over residues 90-99 (DELDDEDLDL) the composition is skewed to acidic residues. The segment covering 126–157 (PIRRPNHEDDDLLSERGSDDGDRRKDRGRGDR) has biased composition (basic and acidic residues). 3 stretches are compositionally biased toward acidic residues: residues 166–176 (RSEDDFIEDDG), 191–200 (NLPEGAEDDA), and 209–238 (FNLD…DGEG). Residues 1183 to 1252 (LGDSRQGGCP…ERFSLFLSCK (70 aa)) form the S1 motif domain. In terms of domain architecture, SH2 spans 1300 to 1389 (HPNFHNVSYE…IARFVQPMIQ (90 aa)).

The protein belongs to the SPT6 family. In terms of assembly, interacts with glp-1 and lin-12. In terms of tissue distribution, abundant in embryos, and less abundant in larvae.

The protein resides in the nucleus. Functionally, histone H3-H4 chaperone that plays a role in maintenance of chromatin structure during RNA polymerase II transcription elongation. Required for several aspects of morphogenesis of C.elegans, including regulation of division in the germline and gut and specification of ventral-uterine precursor cell fate. The chain is Suppressor of Ty 6 homolog (emb-5) from Caenorhabditis elegans.